We begin with the raw amino-acid sequence, 537 residues long: Putative cysteine ligase BshC (537 aa).

A coiled-coil region spans residues 422 to 450 (IEKVEGMIEQQRRLNKDLLDEVAGNQNNI).

This sequence belongs to the BshC family.

Functionally, involved in bacillithiol (BSH) biosynthesis. May catalyze the last step of the pathway, the addition of cysteine to glucosamine malate (GlcN-Mal) to generate BSH. The sequence is that of Putative cysteine ligase BshC from Staphylococcus aureus (strain Mu3 / ATCC 700698).